A 345-amino-acid polypeptide reads, in one-letter code: Viral Fc-gamma receptor-like protein UL119 (345 aa).

The first 23 residues, Met-1–Ser-23, serve as a signal peptide directing secretion. The segment at Ser-23–Ser-42 is disordered. Residues Ser-24–Leu-294 are Virion surface-facing. Asn-34, Asn-48, Asn-95, Asn-104, Asn-148, Asn-179, Asn-198, Asn-217, Asn-225, Asn-241, Asn-244, and Asn-260 each carry an N-linked (GlcNAc...) asparagine; by host glycan. In terms of domain architecture, Ig-like V-type spans Gln-91 to Tyr-190. A helical transmembrane segment spans residues Leu-295 to Leu-317. Residues Ala-318–Trp-345 are Intravirion-facing.

It localises to the virion membrane. Serves as a receptor for the Fc part of human IgG. May thus be involved in interfering with host Ig-mediated immune responses. The protein is Viral Fc-gamma receptor-like protein UL119 (UL119/UL118) of Human cytomegalovirus (strain AD169) (HHV-5).